A 74-amino-acid polypeptide reads, in one-letter code: uncharacterized protein (74 aa).

Positions 29–63 (LNSKKSALQKDKELQQQAKAQESALAGEELRRRAL) form a coiled coil.

This is an uncharacterized protein from Pseudoalteromonas phage PM2 (Bacteriophage PM2).